We begin with the raw amino-acid sequence, 303 residues long: Methionyl-tRNA formyltransferase (303 aa).

106–109 (SLLP) provides a ligand contact to (6S)-5,6,7,8-tetrahydrofolate.

The protein belongs to the Fmt family.

It carries out the reaction L-methionyl-tRNA(fMet) + (6R)-10-formyltetrahydrofolate = N-formyl-L-methionyl-tRNA(fMet) + (6S)-5,6,7,8-tetrahydrofolate + H(+). Its function is as follows. Attaches a formyl group to the free amino group of methionyl-tRNA(fMet). The formyl group appears to play a dual role in the initiator identity of N-formylmethionyl-tRNA by promoting its recognition by IF2 and preventing the misappropriation of this tRNA by the elongation apparatus. This chain is Methionyl-tRNA formyltransferase, found in Thermosipho melanesiensis (strain DSM 12029 / CIP 104789 / BI429).